The following is a 396-amino-acid chain: Acetyl-CoA acetyltransferase ERG10, cytosolic (396 aa).

Cys-91 acts as the Acyl-thioester intermediate in catalysis. Position 186 (Tyr-186) interacts with K(+). CoA is bound by residues Asn-227 and Lys-230. K(+) is bound by residues Ala-246, Pro-247, and Val-347. Active-site proton acceptor residues include His-351 and Cys-381. Asn-382 lines the chloride pocket.

Belongs to the thiolase-like superfamily. Thiolase family. Homotetramer. The cofactor is K(+).

The protein resides in the cytoplasm. It is found in the cytosol. The catalysed reaction is 2 acetyl-CoA = acetoacetyl-CoA + CoA. Its pathway is metabolic intermediate biosynthesis; (R)-mevalonate biosynthesis; (R)-mevalonate from acetyl-CoA: step 1/3. Functionally, acetyl-CoA acetyltransferase; part of the first module of ergosterol biosynthesis pathway that includes the early steps of the pathway, conserved across all eukaryotes, and which results in the formation of mevalonate from acetyl-coenzyme A (acetyl-CoA). ERG10B catalyzes the formation of acetoacetyl-CoA from acetyl-CoA. The first module starts with the action of the cytosolic acetyl-CoA acetyltransferase ERG10B that catalyzes the formation of acetoacetyl-CoA. The hydroxymethylglutaryl-CoA synthases ERG13 then condenses acetyl-CoA with acetoacetyl-CoA to form HMG-CoA. The rate-limiting step of the early module is the reduction to mevalonate by the 3-hydroxy-3-methylglutaryl-coenzyme A (HMG-CoA) reductases HMG1. The chain is Acetyl-CoA acetyltransferase ERG10, cytosolic from Gibberella zeae (strain ATCC MYA-4620 / CBS 123657 / FGSC 9075 / NRRL 31084 / PH-1) (Wheat head blight fungus).